Reading from the N-terminus, the 131-residue chain is Peptide methionine sulfoxide reductase MsrB (131 aa).

One can recognise a MsrB domain in the interval 8 to 130 (LEEWKQMLDP…NSVCLDLVPR (123 aa)). Residues Cys47, Cys50, Cys96, and Cys99 each coordinate Zn(2+). Cys119 serves as the catalytic Nucleophile.

Belongs to the MsrB Met sulfoxide reductase family. Zn(2+) serves as cofactor.

The enzyme catalyses L-methionyl-[protein] + [thioredoxin]-disulfide + H2O = L-methionyl-(R)-S-oxide-[protein] + [thioredoxin]-dithiol. This chain is Peptide methionine sulfoxide reductase MsrB, found in Pseudomonas syringae pv. syringae (strain B728a).